Reading from the N-terminus, the 497-residue chain is Glycerol kinase (497 aa).

T12 is a binding site for ADP. Positions 12, 13, and 14 each coordinate ATP. T12 is a sn-glycerol 3-phosphate binding site. R16 is a binding site for ADP. The sn-glycerol 3-phosphate site is built by R82, E83, Y134, and D243. Residues R82, E83, Y134, D243, and Q244 each coordinate glycerol. 2 residues coordinate ADP: T265 and G308. Residues T265, G308, Q312, and G409 each coordinate ATP. The ADP site is built by G409 and N413.

It belongs to the FGGY kinase family.

The enzyme catalyses glycerol + ATP = sn-glycerol 3-phosphate + ADP + H(+). Its pathway is polyol metabolism; glycerol degradation via glycerol kinase pathway; sn-glycerol 3-phosphate from glycerol: step 1/1. Its activity is regulated as follows. Inhibited by fructose 1,6-bisphosphate (FBP). Its function is as follows. Key enzyme in the regulation of glycerol uptake and metabolism. Catalyzes the phosphorylation of glycerol to yield sn-glycerol 3-phosphate. This chain is Glycerol kinase, found in Solidesulfovibrio magneticus (strain ATCC 700980 / DSM 13731 / RS-1) (Desulfovibrio magneticus).